The chain runs to 420 residues: UDP-N-acetylglucosamine 1-carboxyvinyltransferase (420 aa).

22 to 23 serves as a coordination point for phosphoenolpyruvate; the sequence is KN. UDP-N-acetyl-alpha-D-glucosamine is bound at residue arginine 94. The active-site Proton donor is the cysteine 118. Cysteine 118 is subject to 2-(S-cysteinyl)pyruvic acid O-phosphothioketal. Residues aspartate 306 and isoleucine 328 each contribute to the UDP-N-acetyl-alpha-D-glucosamine site.

Belongs to the EPSP synthase family. MurA subfamily.

The protein localises to the cytoplasm. The enzyme catalyses phosphoenolpyruvate + UDP-N-acetyl-alpha-D-glucosamine = UDP-N-acetyl-3-O-(1-carboxyvinyl)-alpha-D-glucosamine + phosphate. It functions in the pathway cell wall biogenesis; peptidoglycan biosynthesis. Functionally, cell wall formation. Adds enolpyruvyl to UDP-N-acetylglucosamine. This is UDP-N-acetylglucosamine 1-carboxyvinyltransferase from Jannaschia sp. (strain CCS1).